We begin with the raw amino-acid sequence, 559 residues long: Branched-chain-amino-acid aminotransferase-like protein 2 (559 aa).

Belongs to the class-IV pyridoxal-phosphate-dependent aminotransferase family.

The protein is Branched-chain-amino-acid aminotransferase-like protein 2 of Arabidopsis thaliana (Mouse-ear cress).